Here is a 253-residue protein sequence, read N- to C-terminus: DnaJ homolog subfamily C member 8 (253 aa).

Position 2 is an N-acetylalanine (Ala-2). Residue Ser-35 is modified to Phosphoserine. The J domain occupies 57 to 124 (NPFEVLQIDP…QKKRALDVIQ (68 aa)). Lys-146 bears the N6-acetyllysine mark. Positions 181-222 (EAKEMHERKRQREEEIEAQEKAKREREWQKNFEESRDGRVDS) are enriched in basic and acidic residues. The segment at 181–253 (EAKEMHERKR…PPKVKMEQRE (73 aa)) is disordered. 2 consecutive short sequence motifs (nuclear localization signal) follow at residues 189-192 (KRQR) and 203-206 (KRER). At Ser-222 the chain carries Phosphoserine. Over residues 231-240 (KGKKEKKNRT) the composition is skewed to basic residues. The segment at 232–253 (GKKEKKNRTFLRPPKVKMEQRE) is essential for polyglutamine aggregation suppression.

As to quaternary structure, interacts with SRPK1. Interacts with HSP70 (HSPA1A or HSPA1B).

It localises to the nucleus. Its function is as follows. Suppresses polyglutamine (polyQ) aggregation of ATXN3 in neuronal cells. The protein is DnaJ homolog subfamily C member 8 (Dnajc8) of Mus musculus (Mouse).